A 105-amino-acid polypeptide reads, in one-letter code: Small ribosomal subunit protein uS10 (105 aa).

The protein belongs to the universal ribosomal protein uS10 family. In terms of assembly, part of the 30S ribosomal subunit.

Its function is as follows. Involved in the binding of tRNA to the ribosomes. The chain is Small ribosomal subunit protein uS10 from Rickettsia peacockii (strain Rustic).